Consider the following 290-residue polypeptide: Probable branched-chain-amino-acid aminotransferase (290 aa).

Lys-155 is subject to N6-(pyridoxal phosphate)lysine.

The protein belongs to the class-IV pyridoxal-phosphate-dependent aminotransferase family. Pyridoxal 5'-phosphate serves as cofactor.

It catalyses the reaction L-leucine + 2-oxoglutarate = 4-methyl-2-oxopentanoate + L-glutamate. The catalysed reaction is L-isoleucine + 2-oxoglutarate = (S)-3-methyl-2-oxopentanoate + L-glutamate. The enzyme catalyses L-valine + 2-oxoglutarate = 3-methyl-2-oxobutanoate + L-glutamate. It functions in the pathway amino-acid biosynthesis; L-isoleucine biosynthesis; L-isoleucine from 2-oxobutanoate: step 4/4. Its pathway is amino-acid biosynthesis; L-leucine biosynthesis; L-leucine from 3-methyl-2-oxobutanoate: step 4/4. The protein operates within amino-acid biosynthesis; L-valine biosynthesis; L-valine from pyruvate: step 4/4. Its function is as follows. Acts on leucine, isoleucine and valine. This chain is Probable branched-chain-amino-acid aminotransferase (ilvE), found in Rickettsia felis (strain ATCC VR-1525 / URRWXCal2) (Rickettsia azadi).